The chain runs to 148 residues: UPF0735 ACT domain-containing protein Dred_1164 (148 aa).

Residues 72–147 (TLALLMEHQP…GVREVRLVGQ (76 aa)) enclose the ACT domain.

It belongs to the UPF0735 family.

In Desulforamulus reducens (strain ATCC BAA-1160 / DSM 100696 / MI-1) (Desulfotomaculum reducens), this protein is UPF0735 ACT domain-containing protein Dred_1164.